Here is a 555-residue protein sequence, read N- to C-terminus: Spermine oxidase (555 aa).

Residues Ala35, Glu55, Arg63, 79 to 80, and Val261 each bind FAD; that span reads TW. A disordered region spans residues 271–306; sequence ARPRGPEIEPRGEGDHNHDTGEGGQGGEEPRGGRWD. A compositionally biased stretch (basic and acidic residues) spans 274 to 291; that stretch reads RGPEIEPRGEGDHNHDTG. FAD contacts are provided by residues Glu519 and 528-529; that span reads TT.

Belongs to the flavin monoamine oxidase family. Requires FAD as cofactor. Widely expressed. Expressed in human tumor cell lines. Isoform 4 is only found in an embryonal kidney cell line.

It is found in the cytoplasm. Its subcellular location is the nucleus. The enzyme catalyses spermine + O2 + H2O = 3-aminopropanal + spermidine + H2O2. Its pathway is amine and polyamine degradation; spermine degradation. Inhibited at more than 90% by SL-11144, SL-11150 and SL-11158, at concentrations less than 1 uM. Functionally, flavoenzyme which catalyzes the oxidation of spermine to spermidine. Can also use N(1)-acetylspermine and spermidine as substrates, with different affinity depending on the isoform (isozyme) and on the experimental conditions. Plays an important role in the regulation of polyamine intracellular concentration and has the potential to act as a determinant of cellular sensitivity to the antitumor polyamine analogs. May contribute to beta-alanine production via aldehyde dehydrogenase conversion of 3-amino-propanal. The protein is Spermine oxidase (SMOX) of Homo sapiens (Human).